Here is a 983-residue protein sequence, read N- to C-terminus: Poly [ADP-ribose] polymerase 1 (983 aa).

PARP-type zinc fingers lie at residues 8 to 91 (WRAE…ESGA) and 114 to 194 (YGIE…KKAL). C20, C23, H52, C55, C126, C129, H156, and C159 together coordinate Zn(2+). Residues 197–246 (AKTETAEARQTNSRAGTKRKNDSVDNEKSKLAKSSFDMSTSGALQPCSKE) are disordered. Over residues 215–226 (RKNDSVDNEKSK) the composition is skewed to basic and acidic residues. The region spanning 236 to 375 (TSGALQPCSK…SVKPKRILRP (140 aa)) is the PADR1 zinc-binding domain. The interval 301–345 (GPLALCPMCSGHLSFSGGLYRCHGYISEWSKCSHSTLDPDRIKGK) is zinc ribbon. C306, C309, C322, and C332 together coordinate Zn(2+). The segment at 369–397 (PKRILRPVLSGETSQGQGSKDATDSSRSE) is disordered. Residues 379–388 (GETSQGQGSK) are compositionally biased toward polar residues. Residues 394-484 (SRSERLADLK…RKLPFDKYKI (91 aa)) form the BRCT domain. The region spanning 511 to 611 (HCHILEDGNS…TNFQKQPGKF (101 aa)) is the WGR domain. Residues 633-751 (SSNLAPSLIE…DIEIASRIVG (119 aa)) enclose the PARP alpha-helical domain. One can recognise a PARP catalytic domain in the interval 758 to 983 (ESLDDKYKKL…LLKVRFKHKR (226 aa)).

It belongs to the ARTD/PARP family.

The protein resides in the nucleus. The enzyme catalyses NAD(+) + (ADP-D-ribosyl)n-acceptor = nicotinamide + (ADP-D-ribosyl)n+1-acceptor + H(+).. The catalysed reaction is L-aspartyl-[protein] + NAD(+) = 4-O-(ADP-D-ribosyl)-L-aspartyl-[protein] + nicotinamide. It catalyses the reaction L-glutamyl-[protein] + NAD(+) = 5-O-(ADP-D-ribosyl)-L-glutamyl-[protein] + nicotinamide. Functionally, involved in the base excision repair (BER) pathway, by catalyzing the poly(ADP-ribosyl)ation of a limited number of acceptor proteins involved in chromatin architecture and in DNA metabolism. This modification follows DNA damages and appears as an obligatory step in a detection/signaling pathway leading to the reparation of DNA strand breaks. The chain is Poly [ADP-ribose] polymerase 1 (PARP1) from Arabidopsis thaliana (Mouse-ear cress).